The chain runs to 460 residues: SPbeta prophage-derived uncharacterized protein YopQ (460 aa).

In Bacillus subtilis (strain 168), this protein is SPbeta prophage-derived uncharacterized protein YopQ (yopQ).